The primary structure comprises 92 residues: Small ribosomal subunit protein bS21A (92 aa).

The span at 25-52 (GVFREMKQRRSYEKPSERKTREKSEAIR) shows a compositional bias: basic and acidic residues. The disordered stretch occupies residues 25–92 (GVFREMKQRR…LPQTAARPAG (68 aa)).

Belongs to the bacterial ribosomal protein bS21 family.

The sequence is that of Small ribosomal subunit protein bS21A from Bradyrhizobium diazoefficiens (strain JCM 10833 / BCRC 13528 / IAM 13628 / NBRC 14792 / USDA 110).